The primary structure comprises 63 residues: UPF0434 protein Sde_1297 (63 aa).

The protein belongs to the UPF0434 family.

The polypeptide is UPF0434 protein Sde_1297 (Saccharophagus degradans (strain 2-40 / ATCC 43961 / DSM 17024)).